The chain runs to 514 residues: Peptide chain release factor 3 (514 aa).

The tr-type G domain maps to 8-268 (KKRRTFAIIS…TFLKFAPEPH (261 aa)). GTP-binding positions include 17-24 (SHPDAGKT), 85-89 (DTPGH), and 139-142 (NKLD).

Belongs to the TRAFAC class translation factor GTPase superfamily. Classic translation factor GTPase family. PrfC subfamily.

Its subcellular location is the cytoplasm. In terms of biological role, increases the formation of ribosomal termination complexes and stimulates activities of RF-1 and RF-2. It binds guanine nucleotides and has strong preference for UGA stop codons. It may interact directly with the ribosome. The stimulation of RF-1 and RF-2 is significantly reduced by GTP and GDP, but not by GMP. This chain is Peptide chain release factor 3, found in Streptococcus gordonii (strain Challis / ATCC 35105 / BCRC 15272 / CH1 / DL1 / V288).